The primary structure comprises 339 residues: Coproporphyrin III ferrochelatase (339 aa).

S52 and Y121 together coordinate Fe-coproporphyrin III. Positions 181 and 264 each coordinate Fe(2+).

It belongs to the ferrochelatase family.

The protein localises to the cytoplasm. The enzyme catalyses Fe-coproporphyrin III + 2 H(+) = coproporphyrin III + Fe(2+). Its pathway is porphyrin-containing compound metabolism; protoheme biosynthesis. Functionally, involved in coproporphyrin-dependent heme b biosynthesis. Catalyzes the insertion of ferrous iron into coproporphyrin III to form Fe-coproporphyrin III. The chain is Coproporphyrin III ferrochelatase from Mycolicibacterium vanbaalenii (strain DSM 7251 / JCM 13017 / BCRC 16820 / KCTC 9966 / NRRL B-24157 / PYR-1) (Mycobacterium vanbaalenii).